We begin with the raw amino-acid sequence, 348 residues long: WRKY transcription factor WRKY71 (348 aa).

Positions 50-84 (VAALEAELKRMGAENRQLSEMLAAVAAKYEALQSQ) form a coiled coil. 2 disordered regions span residues 91–141 (ASAN…APHH) and 246–287 (GEHN…APVV). A compositionally biased stretch (low complexity) spans 102–114 (NQSSTSEGGSVSP). The Nuclear localization signal signature appears at 116–122 (RKRKSES). Positions 126 to 136 (SPPPPPPPHPH) are enriched in pro residues. The segment at residues 187–253 (DLSLVVKDGY…YEGEHNHGQP (67 aa)) is a DNA-binding region (WRKY). Positions 267 to 348 (SGKSAGKPPH…RILELSPTKD (82 aa)) are transcription repression of gibberellic acid (GA)-induced promoters. Positions 275–286 (PHAPAAAPPAPV) are enriched in pro residues.

It belongs to the WRKY group II-a family. In terms of assembly, interacts with WRKY51; this interaction promotes W box binding of the complex WRKY51/WRKY71 in a zinc ion-dependent manner. In terms of tissue distribution, highly expressed in aleurone cells. In seeds, predominantly present in the plumule, radicle and scutellum of the embryo. Expressed in roots, stems, young leaves and spikelets.

The protein resides in the nucleus. Transcription repressor. Interacts specifically with the W box (5'-(T)TGAC[CT]-3'), a frequently occurring elicitor-responsive cis-acting element. Represses specifically gibberellic acid (GA)-induced promoters in aleurone cells, probably by interfering with GAM1. Regulates, probably indirectly, the activation of defense-related genes such as GF14E during defense response. Modulates plant innate immunity against X.oryzae pv. oryzae (Xoo). Confers resistance to the virulent bacterial pathogen X.oryzae pv. oryzae (Xoo) 13751, probably via the regulation of NPR1 and PR1b defense signaling pathways. The sequence is that of WRKY transcription factor WRKY71 from Oryza sativa subsp. indica (Rice).